Here is a 461-residue protein sequence, read N- to C-terminus: Protein-serine O-palmitoleoyltransferase porcupine (461 aa).

Residues 1–17 are Cytoplasmic-facing; sequence MATFSRQEFFQQLLQGC. A helical membrane pass occupies residues 18–38; it reads LLPTAQQGLDQIWLLLAICLA. Residues 39–66 are Extracellular-facing; the sequence is CRLLWRLGLPSYLKHASTVAGGFFSLYH. A helical transmembrane segment spans residues 67–87; sequence FFQLHMVWVVLLSLLCYLVLF. The Cytoplasmic segment spans residues 88 to 95; sequence LCRHSSHR. The helical transmembrane segment at 96 to 116 threads the bilayer; that stretch reads GVFLSVTILIYLLMGEMHMVD. Residues 117–152 are Extracellular-facing; sequence TVTWHKMRGAQMIVAMKAVSLGFDLDRGEVGTVPSP. The helical transmembrane segment at 153 to 173 threads the bilayer; it reads VEFMGYLYFVGTIVFGPWISF. Over 174-198 the chain is Cytoplasmic; sequence HSYLQAVQGRPLSCRWLQKVARSLA. C187 carries the S-palmitoyl cysteine lipid modification. A helical transmembrane segment spans residues 199–219; that stretch reads LALLCLVLSTCVGPYLFPYFI. The Extracellular segment spans residues 220–252; the sequence is PLNGDRLLRNKKRKARGTMVRWLRAYESAVSFH. Residues 253 to 273 traverse the membrane as a helical segment; that stretch reads FSNYFVGFLSEATATLAGAGF. At 274–337 the chain is on the cytoplasmic side; it reads TEEKDHLEWD…SAVLVTYAAS (64 aa). Residues 338–358 form a helical membrane-spanning segment; the sequence is ALLHGFSFHLAAVLLSLAFIT. The active site involves H341. The Extracellular portion of the chain corresponds to 359 to 396; the sequence is YVEHVLRKRLARILSACVLSKRCPPDCSHQHRLGLGVR. The helical transmembrane segment at 397–417 threads the bilayer; that stretch reads ALNLLFGALAIFHLAYLGSLF. At 418 to 461 the chain is on the cytoplasmic side; it reads DVDVDDTTEEQGYGMAYTVHKWSELSWASHWVTFGCWIFYRLIG.

It belongs to the membrane-bound acyltransferase family. Porcupine subfamily. Interacts with WNT1, WNT3, WNT3A, WNT4, WNT5A, WNT5B, WNT6, WNT7A and WNT7B. In terms of tissue distribution, isoform 1 is expressed in fetal brain, brain, amygdala, caudate nucleus, cerebellum, hippocampus, pituitary, thalamus, heart, skeletal muscle and testis. Isoform 4 is expressed in amygdala, corpus callosum, hippocampus, spinal cord, kidney, liver, lung, spleen, uterus, testis. Isoform 2 and isoform 3 are expressed in substantia negra, spinal cord, heart and lung.

The protein resides in the endoplasmic reticulum membrane. It catalyses the reaction [Wnt protein]-L-serine + (9Z)-hexadecenoyl-CoA = [Wnt protein]-O-(9Z)-hexadecenoyl-L-serine + CoA. Protein-serine O-palmitoleoyltransferase that acts as a key regulator of the Wnt signaling pathway by mediating the attachment of palmitoleate, a 16-carbon monounsaturated fatty acid (C16:1(9Z)), to Wnt proteins. Serine palmitoleoylation of WNT proteins is required for efficient binding to frizzled receptors. This chain is Protein-serine O-palmitoleoyltransferase porcupine, found in Homo sapiens (Human).